The chain runs to 168 residues: Phosphopantetheine adenylyltransferase (168 aa).

Thr13 lines the substrate pocket. ATP-binding positions include 13 to 14 and His21; that span reads TF. Residues Lys45, Leu78, and Arg92 each coordinate substrate. ATP-binding positions include 93-95, Glu103, and 128-134; these read GLR and TQFISSS.

Belongs to the bacterial CoaD family. Homohexamer. It depends on Mg(2+) as a cofactor.

It is found in the cytoplasm. It carries out the reaction (R)-4'-phosphopantetheine + ATP + H(+) = 3'-dephospho-CoA + diphosphate. It participates in cofactor biosynthesis; coenzyme A biosynthesis; CoA from (R)-pantothenate: step 4/5. In terms of biological role, reversibly transfers an adenylyl group from ATP to 4'-phosphopantetheine, yielding dephospho-CoA (dPCoA) and pyrophosphate. The polypeptide is Phosphopantetheine adenylyltransferase (Wolbachia pipientis wMel).